Reading from the N-terminus, the 401-residue chain is Argininosuccinate synthase (401 aa).

Position 9–17 (9–17) interacts with ATP; sequence AYSGGLDTS. Residue Y86 participates in L-citrulline binding. G116 provides a ligand contact to ATP. L-aspartate-binding residues include T118, N122, and D123. N122 is a binding site for L-citrulline. L-citrulline-binding residues include R126, S174, S183, E259, and Y271.

Belongs to the argininosuccinate synthase family. Type 1 subfamily. Homotetramer.

The protein resides in the cytoplasm. The catalysed reaction is L-citrulline + L-aspartate + ATP = 2-(N(omega)-L-arginino)succinate + AMP + diphosphate + H(+). The protein operates within amino-acid biosynthesis; L-arginine biosynthesis; L-arginine from L-ornithine and carbamoyl phosphate: step 2/3. The sequence is that of Argininosuccinate synthase from Bacillus cereus (strain AH820).